The chain runs to 359 residues: Heme A synthase (359 aa).

6 consecutive transmembrane segments (helical) span residues 23–43, 85–105, 109–129, 137–157, 172–192, and 212–232; these read AVAF…VLGG, YAAL…FFEW, LLGR…WLRG, LKLL…WWMV, LAIH…LAAS, and AGLI…VAGL. H276 is a heme binding site. 3 consecutive transmembrane segments (helical) span residues 278 to 298, 308 to 328, and 329 to 349; these read MVAY…SGTL, IALL…LVLV, and VPLW…GMAV. Residue H337 participates in heme binding.

This sequence belongs to the COX15/CtaA family. Type 2 subfamily. In terms of assembly, interacts with CtaB. Requires heme b as cofactor.

It is found in the cell membrane. It catalyses the reaction Fe(II)-heme o + 2 A + H2O = Fe(II)-heme a + 2 AH2. It participates in porphyrin-containing compound metabolism; heme A biosynthesis; heme A from heme O: step 1/1. Catalyzes the conversion of heme O to heme A by two successive hydroxylations of the methyl group at C8. The first hydroxylation forms heme I, the second hydroxylation results in an unstable dihydroxymethyl group, which spontaneously dehydrates, resulting in the formyl group of heme A. The protein is Heme A synthase of Beijerinckia indica subsp. indica (strain ATCC 9039 / DSM 1715 / NCIMB 8712).